We begin with the raw amino-acid sequence, 129 residues long: Protein Turandot B2 (129 aa).

The N-terminal stretch at methionine 1–glycine 21 is a signal peptide.

It belongs to the Turandot family.

Its subcellular location is the secreted. Functionally, a humoral factor that may play a role in stress tolerance. The chain is Protein Turandot B2 (TotB2) from Drosophila erecta (Fruit fly).